A 479-amino-acid polypeptide reads, in one-letter code: Gamma-aminobutyric acid receptor subunit rho-1 (479 aa).

The N-terminal stretch at 1–21 is a signal peptide; sequence MLAVPNMRFGIFLLWWGWVLA. Over 22 to 280 the chain is Extracellular; the sequence is TESRMHWPGR…LYINFTLRRH (259 aa). The disordered stretch occupies residues 32–55; that stretch reads EVHEMSKKGRPQRQRREVHEDAHK. The span at 45–55 shows a compositional bias: basic and acidic residues; that stretch reads QRREVHEDAHK. 4-aminobutanoate is bound at residue R125. N-linked (GlcNAc...) asparagine glycosylation is present at N140. S189 is a 4-aminobutanoate binding site. A disulfide bridge links C198 with C212. E217 lines the 4-aminobutanoate pocket. 2 N-linked (GlcNAc...) asparagine glycosylation sites follow: N234 and N274. Residues 281–301 form a helical membrane-spanning segment; sequence IFFFLLQTYFPATLMVMLSWV. Residues 302–313 are Cytoplasmic-facing; it reads SFWIDRRAVPAR. A helical transmembrane segment spans residues 314-334; the sequence is VPLGITTVLTMSTIITGVNAS. At 335–345 the chain is on the extracellular side; the sequence is MPRVSYIKAVD. Residues 346 to 366 form a helical membrane-spanning segment; sequence IYLWVSFVFVFLSVLEYAAVN. Residues 367 to 457 lie on the Cytoplasmic side of the membrane; it reads YLTTVQERKE…MRIDTHAIDK (91 aa). A helical membrane pass occupies residues 458–478; the sequence is YSRIIFPAAYILFNLIYWSIF. S479 is a topological domain (extracellular).

It belongs to the ligand-gated ion channel (TC 1.A.9) family. Gamma-aminobutyric acid receptor (TC 1.A.9.5) subfamily. GABRR1 sub-subfamily. In terms of assembly, three rho subunits (rho-1/GBRR1, rho-2/GBRR2 and rho-3/GBRR3) coassemble either to form functional homopentamers or heteropentamers. Rho-1/GBRR1 subunits can also associate with alpha-1/GBRA1 subunits to form a functional GABAAR. Interacts with SQSTM1. As to expression, highly expressed in the retina. Expressed in a lesser extent in brain, lung and thymus.

The protein localises to the postsynaptic cell membrane. It localises to the cell membrane. It catalyses the reaction chloride(in) = chloride(out). Its activity is regulated as follows. Inhibited by TPMPA, a rho-specific antagonist, when forming a homopentamer. In contrast with other GABAARs, rho-1 GABAAR is not inhibited by bicuculline, when forming a homopentamer. Functionally, rho subunit of the pentameric ligand-gated chloride channels responsible for mediating the effects of gamma-aminobutyric acid (GABA), the major inhibitory neurotransmitter in the brain. Rho-containing GABA-gated chloride channels are a subclass of GABA(A) receptors (GABAARs) entirely composed of rho subunits, where GABA molecules bind at the rho intersubunit interfaces. When activated by GABA, rho-GABAARs selectively allow the flow of chloride anions across the cell membrane down their electrochemical gradient. Rho-1 subunits are primarily expressed in retina where rho-1-containing GABAARs may play a role in retinal neurotransmission. Rho-1 GABAARs are also involved in neuronal tonic (extrasynaptic) and phasic (synaptic) transmission in the Purkinje neurons of the cerebellum. Rho-1 GABAARs may also contribute to the regulation of glial development in the cerebellum by controlling extrasynaptic transmission. This chain is Gamma-aminobutyric acid receptor subunit rho-1, found in Homo sapiens (Human).